The sequence spans 256 residues: Ubiquinone/menaquinone biosynthesis C-methyltransferase UbiE (256 aa).

Residues 1 to 12 are compositionally biased toward basic and acidic residues; the sequence is MNDQRKGDHAEP. Positions 1–22 are disordered; the sequence is MNDQRKGDHAEPTTHFGYQDVP. S-adenosyl-L-methionine is bound by residues Thr79, Asp100, and 128-129; that span reads DA.

Belongs to the class I-like SAM-binding methyltransferase superfamily. MenG/UbiE family.

The enzyme catalyses a 2-demethylmenaquinol + S-adenosyl-L-methionine = a menaquinol + S-adenosyl-L-homocysteine + H(+). The catalysed reaction is a 2-methoxy-6-(all-trans-polyprenyl)benzene-1,4-diol + S-adenosyl-L-methionine = a 5-methoxy-2-methyl-3-(all-trans-polyprenyl)benzene-1,4-diol + S-adenosyl-L-homocysteine + H(+). It functions in the pathway quinol/quinone metabolism; menaquinone biosynthesis; menaquinol from 1,4-dihydroxy-2-naphthoate: step 2/2. The protein operates within cofactor biosynthesis; ubiquinone biosynthesis. Functionally, methyltransferase required for the conversion of demethylmenaquinol (DMKH2) to menaquinol (MKH2) and the conversion of 2-polyprenyl-6-methoxy-1,4-benzoquinol (DDMQH2) to 2-polyprenyl-3-methyl-6-methoxy-1,4-benzoquinol (DMQH2). The protein is Ubiquinone/menaquinone biosynthesis C-methyltransferase UbiE of Pseudomonas putida (Arthrobacter siderocapsulatus).